Here is a 401-residue protein sequence, read N- to C-terminus: Protein KlcB (401 aa).

Positions 253-311 are disordered; that stretch reads AARSNAKGKAGGRERDPASAETAMRCSTAKADDCKAEAGPVSPEATMPGAGEASCSTAR.

This is Protein KlcB (klcB) from Escherichia coli.